A 151-amino-acid chain; its full sequence is 3-hydroxyacyl-[acyl-carrier-protein] dehydratase FabZ (151 aa).

Residue H57 is part of the active site.

This sequence belongs to the thioester dehydratase family. FabZ subfamily.

Its subcellular location is the cytoplasm. The catalysed reaction is a (3R)-hydroxyacyl-[ACP] = a (2E)-enoyl-[ACP] + H2O. Functionally, involved in unsaturated fatty acids biosynthesis. Catalyzes the dehydration of short chain beta-hydroxyacyl-ACPs and long chain saturated and unsaturated beta-hydroxyacyl-ACPs. The polypeptide is 3-hydroxyacyl-[acyl-carrier-protein] dehydratase FabZ (Prochlorococcus marinus (strain SARG / CCMP1375 / SS120)).